A 226-amino-acid polypeptide reads, in one-letter code: ATP synthase subunit a (226 aa).

The next 6 helical transmembrane spans lie at 18–38 (FITG…SLGA), 79–99 (LAGT…IPGF), 105–125 (SWSF…FEGI), 134–154 (FAHF…IEII), 179–199 (LIML…VLFF), and 201–221 (GILQ…GAVL).

The protein belongs to the ATPase A chain family. As to quaternary structure, F-type ATPases have 2 components, CF(1) - the catalytic core - and CF(0) - the membrane proton channel. CF(1) has five subunits: alpha(3), beta(3), gamma(1), delta(1), epsilon(1). CF(0) has three main subunits: a(1), b(2) and c(9-12). The alpha and beta chains form an alternating ring which encloses part of the gamma chain. CF(1) is attached to CF(0) by a central stalk formed by the gamma and epsilon chains, while a peripheral stalk is formed by the delta and b chains.

It is found in the cell inner membrane. Its function is as follows. Key component of the proton channel; it plays a direct role in the translocation of protons across the membrane. This is ATP synthase subunit a from Helicobacter pylori (strain HPAG1).